Here is a 37-residue protein sequence, read N- to C-terminus: Large ribosomal subunit protein bL36 (37 aa).

This sequence belongs to the bacterial ribosomal protein bL36 family.

This Psychromonas ingrahamii (strain DSM 17664 / CCUG 51855 / 37) protein is Large ribosomal subunit protein bL36.